The primary structure comprises 642 residues: Sec1 family domain-containing protein 1 (642 aa).

An N-acetylalanine modification is found at A2. A phosphoserine mark is found at S37, S303, and S528.

Belongs to the STXBP/unc-18/SEC1 family. Interacts with STX17. Interacts with STX5A. Interacts with the COG complex via COG4.

The protein localises to the cytoplasm. It is found in the endoplasmic reticulum membrane. Its subcellular location is the golgi apparatus. It localises to the golgi stack membrane. Functionally, plays a role in SNARE-pin assembly and Golgi-to-ER retrograde transport via its interaction with COG4. Involved in vesicular transport between the endoplasmic reticulum and the Golgi. The sequence is that of Sec1 family domain-containing protein 1 (SCFD1) from Homo sapiens (Human).